Consider the following 370-residue polypeptide: 3-isopropylmalate dehydrogenase (370 aa).

Gly-77–Glu-90 provides a ligand contact to NAD(+). Substrate contacts are provided by Arg-97, Arg-107, Arg-135, and Asp-226. Mg(2+)-binding residues include Asp-226, Asp-250, and Asp-254. Gly-290–Asn-302 provides a ligand contact to NAD(+).

This sequence belongs to the isocitrate and isopropylmalate dehydrogenases family. LeuB type 1 subfamily. As to quaternary structure, homodimer. Mg(2+) is required as a cofactor. Mn(2+) serves as cofactor.

The protein resides in the cytoplasm. The catalysed reaction is (2R,3S)-3-isopropylmalate + NAD(+) = 4-methyl-2-oxopentanoate + CO2 + NADH. Its pathway is amino-acid biosynthesis; L-leucine biosynthesis; L-leucine from 3-methyl-2-oxobutanoate: step 3/4. Functionally, catalyzes the oxidation of 3-carboxy-2-hydroxy-4-methylpentanoate (3-isopropylmalate) to 3-carboxy-4-methyl-2-oxopentanoate. The product decarboxylates to 4-methyl-2 oxopentanoate. This chain is 3-isopropylmalate dehydrogenase, found in Nitrobacter winogradskyi (strain ATCC 25391 / DSM 10237 / CIP 104748 / NCIMB 11846 / Nb-255).